Reading from the N-terminus, the 188-residue chain is Tuftelin (188 aa).

The stretch at 1–181 (SLRKTVQDLL…DRMEHLIEKQ (181 aa)) forms a coiled coil.

It belongs to the tuftelin family. Interacts with TFIP11.

Its subcellular location is the secreted. In terms of biological role, involved in the structural organization of the epidermis. Involved in the mineralization and structural organization of enamel. The sequence is that of Tuftelin (TUFT1) from Sus scrofa (Pig).